A 479-amino-acid chain; its full sequence is MSGPQAPEPTLEGQADASAGSPDEDAAEGIQHSHRMLSFSDALLSIIATVMEFDKSVQRLLATRIAVYLMTFLIVTVAWAAHTRLFQVVGKIDDTLALLNLFSLMVTFPEVPLGIFLFCMCVIAIGAVQALIVLYAFHFPHLLSPQIERSAHRGLYRQRVLGIIVRGPALCLAAAGFSLFFYPASYLLMAMVIVLPHVSKAAGWCRAQLVGPREPPAHSVEVFTFDLHEPLSKERVEAFSDGVYAIVATLLILDICEDNVPDAKDVKEKFQGSLVAALGESGPHFLAYFGSFATVGLLWFAHHSLFLHIRRATQPMGLLNTLSLAFVGGLPLAYQQTSAFTKQPRDELESVRISCAIIFLASIFQFAIWTTALLQEGETLQPSARFGGREHAFMFAKLALYPCASLLAFACTCVLSSFSTAIFHAMQIAVPFAFLLLRLLVRLALAGLRALRGLVGPVLARPAPGAADEAQSPLLPAPC.

The disordered stretch occupies residues 1-26 (MSGPQAPEPTLEGQADASAGSPDEDA). Residues 1-33 (MSGPQAPEPTLEGQADASAGSPDEDAAEGIQHS) lie on the Cytoplasmic side of the membrane. A helical membrane pass occupies residues 34-56 (HRMLSFSDALLSIIATVMEFDKS). A RxxxFSD motif 1 motif is present at residues 35–41 (RMLSFSD). The short helix H2-1 stretch occupies residues 52-58 (EFDKSVQ). At 57–64 (VQRLLATR) the chain is on the lumenal side. A helical transmembrane segment spans residues 65–87 (IAVYLMTFLIVTVAWAAHTRLFQ). Residues 88–93 (VVGKID) are Cytoplasmic-facing. Residues 94–103 (DTLALLNLFS) form a helical membrane-spanning segment. At 104–113 (LMVTFPEVPL) the chain is on the lumenal side. Residues 114 to 135 (GIFLFCMCVIAIGAVQALIVLY) form a helical membrane-spanning segment. Over 136–159 (AFHFPHLLSPQIERSAHRGLYRQR) the chain is Cytoplasmic. Residues 160–180 (VLGIIVRGPALCLAAAGFSLF) form a helical membrane-spanning segment. Over 181-185 (FYPAS) the chain is Lumenal. The helical transmembrane segment at 186-205 (YLLMAMVIVLPHVSKAAGWC) threads the bilayer. Residues 206–232 (RAQLVGPREPPAHSVEVFTFDLHEPLS) are Cytoplasmic-facing. A helical transmembrane segment spans residues 233–257 (KERVEAFSDGVYAIVATLLILDICE). The RxxxFSD motif 2 signature appears at 235 to 241 (RVEAFSD). Residues 258-284 (DNVPDAKDVKEKFQGSLVAALGESGPH) lie on the Lumenal side of the membrane. Residues 263 to 271 (AKDVKEKFQ) form a short helix H1-2 region. A short helix H2-2 region spans residues 273–279 (SLVAALG). A helical membrane pass occupies residues 285-307 (FLAYFGSFATVGLLWFAHHSLFL). Over 308 to 313 (HIRRAT) the chain is Cytoplasmic. A helical membrane pass occupies residues 314-335 (QPMGLLNTLSLAFVGGLPLAYQ). At 336–350 (QTSAFTKQPRDELES) the chain is on the lumenal side. Residues 351–371 (VRISCAIIFLASIFQFAIWTT) form a helical membrane-spanning segment. Topologically, residues 372–391 (ALLQEGETLQPSARFGGREH) are cytoplasmic. A helical membrane pass occupies residues 392 to 415 (AFMFAKLALYPCASLLAFACTCVL). The Lumenal portion of the chain corresponds to 416–417 (SS). A helical transmembrane segment spans residues 418–444 (FSTAIFHAMQIAVPFAFLLLRLLVRLA). The Cytoplasmic portion of the chain corresponds to 445 to 479 (LAGLRALRGLVGPVLARPAPGAADEAQSPLLPAPC).

It belongs to the TMEM175 family. As to quaternary structure, homodimer. Interacts with AKT (AKT1, AKT2 or AKT3); leading to formation of the lysoK(GF) complex, which activates the channel. Interacts with LAMP1; inhibiting the proton channel activity of TMEM175. Interacts with LAMP2; inhibiting the proton channel activity of TMEM175.

It localises to the endosome membrane. It is found in the lysosome membrane. It catalyses the reaction H(+)(in) = H(+)(out). It carries out the reaction K(+)(in) = K(+)(out). With respect to regulation, active at low pH (under pH 4.6): proton channel activity is activated by luminal side protons. Polyunsaturated fatty acids, such as arachidonic acid, also activate the channel activity. Proton channel activity is directly inhibited by LAMP1 or LAMP2, facilitating lysosomal acidification. Channel activity is activated following interaction with AKT (AKT1, AKT2 or AKT3): interaction promotes activation from closed to an open state. Activation by AKT is independent of AKT serine/threonine-protein kinase activity. In terms of biological role, proton-activated proton channel that catalyzes proton efflux from endosomes and lysosomes to maintain a steady-state pH. Activated at low pH (under pH 4.6) by luminal side protons: selectively mediates lysosomal proton release from lysosomes, eliciting a proton leak that balances V-ATPase activity to maintain pH homeostasis. Regulation of lumenal pH stability is required for autophagosome-lysosome fusion. Also acts as a potassium channel at higher pH, regulating potassium conductance in endosomes and lysosomes. Constitutes the pore-forming subunit of the lysoK(GF) complex, a complex activated by extracellular growth factors. The lysoK(GF) complex is composed of TMEM175 and AKT (AKT1, AKT2 or AKT3), a major target of growth factor receptors: in the complex, TMEM175 channel is opened by conformational changes by AKT, leading to its activation. The lysoK(GF) complex is required to protect neurons against stress-induced damage. This Bos taurus (Bovine) protein is Endosomal/lysosomal proton channel TMEM175.